A 353-amino-acid chain; its full sequence is Holliday junction branch migration complex subunit RuvB (353 aa).

The interval A4–Y185 is large ATPase domain (RuvB-L). ATP-binding positions include I24, R25, G66, K69, T70, T71, E132 to F134, R175, Y185, and R222. T70 is a Mg(2+) binding site. Positions N186 to D256 are small ATPAse domain (RuvB-S). The tract at residues E259–L353 is head domain (RuvB-H). Positions 295, 314, and 319 each coordinate DNA.

Belongs to the RuvB family. In terms of assembly, homohexamer. Forms an RuvA(8)-RuvB(12)-Holliday junction (HJ) complex. HJ DNA is sandwiched between 2 RuvA tetramers; dsDNA enters through RuvA and exits via RuvB. An RuvB hexamer assembles on each DNA strand where it exits the tetramer. Each RuvB hexamer is contacted by two RuvA subunits (via domain III) on 2 adjacent RuvB subunits; this complex drives branch migration. In the full resolvosome a probable DNA-RuvA(4)-RuvB(12)-RuvC(2) complex forms which resolves the HJ.

It localises to the cytoplasm. The enzyme catalyses ATP + H2O = ADP + phosphate + H(+). Its function is as follows. The RuvA-RuvB-RuvC complex processes Holliday junction (HJ) DNA during genetic recombination and DNA repair, while the RuvA-RuvB complex plays an important role in the rescue of blocked DNA replication forks via replication fork reversal (RFR). RuvA specifically binds to HJ cruciform DNA, conferring on it an open structure. The RuvB hexamer acts as an ATP-dependent pump, pulling dsDNA into and through the RuvAB complex. RuvB forms 2 homohexamers on either side of HJ DNA bound by 1 or 2 RuvA tetramers; 4 subunits per hexamer contact DNA at a time. Coordinated motions by a converter formed by DNA-disengaged RuvB subunits stimulates ATP hydrolysis and nucleotide exchange. Immobilization of the converter enables RuvB to convert the ATP-contained energy into a lever motion, pulling 2 nucleotides of DNA out of the RuvA tetramer per ATP hydrolyzed, thus driving DNA branch migration. The RuvB motors rotate together with the DNA substrate, which together with the progressing nucleotide cycle form the mechanistic basis for DNA recombination by continuous HJ branch migration. Branch migration allows RuvC to scan DNA until it finds its consensus sequence, where it cleaves and resolves cruciform DNA. This chain is Holliday junction branch migration complex subunit RuvB, found in Pseudomonas syringae pv. syringae (strain B728a).